A 423-amino-acid chain; its full sequence is Mannose-6-phosphate isomerase (423 aa).

Position 2 is an N-acetylalanine (alanine 2). Serine 102 and serine 108 each carry phosphoserine. Positions 110, 112, 137, and 276 each coordinate Zn(2+). Residue arginine 295 is part of the active site.

This sequence belongs to the mannose-6-phosphate isomerase type 1 family. The cofactor is Zn(2+).

Its subcellular location is the cytoplasm. It catalyses the reaction D-mannose 6-phosphate = D-fructose 6-phosphate. The protein operates within nucleotide-sugar biosynthesis; GDP-alpha-D-mannose biosynthesis; alpha-D-mannose 1-phosphate from D-fructose 6-phosphate: step 1/2. In terms of biological role, isomerase that catalyzes the interconversion of fructose-6-P and mannose-6-P and has a critical role in the supply of D-mannose derivatives required for many eukaryotic glycosylation reactions. This is Mannose-6-phosphate isomerase (MPI) from Macaca fascicularis (Crab-eating macaque).